A 432-amino-acid chain; its full sequence is D-amino acid dehydrogenase (432 aa).

3–17 (VVILGSGVVGVASAW) provides a ligand contact to FAD.

This sequence belongs to the DadA oxidoreductase family. It depends on FAD as a cofactor.

It carries out the reaction a D-alpha-amino acid + A + H2O = a 2-oxocarboxylate + AH2 + NH4(+). It participates in amino-acid degradation; D-alanine degradation; NH(3) and pyruvate from D-alanine: step 1/1. Oxidative deamination of D-amino acids. The polypeptide is D-amino acid dehydrogenase (Klebsiella pneumoniae (strain 342)).